We begin with the raw amino-acid sequence, 381 residues long: Creatine kinase M-type (381 aa).

Residues 11–98 form the Phosphagen kinase N-terminal domain; it reads KLNFKAEEEY…FDPIIQDRHG (88 aa). Residues 125 to 367 form the Phosphagen kinase C-terminal domain; the sequence is YVLSSRVRTG…KLMVEMEKKL (243 aa). Residue 128-132 participates in ATP binding; sequence SSRVR. Residue serine 164 is modified to Phosphoserine. A Phosphothreonine modification is found at threonine 166. Serine 178 carries the post-translational modification Phosphoserine. Threonine 180 bears the Phosphothreonine mark. Histidine 191 is a binding site for ATP. At serine 199 the chain carries Phosphoserine. ATP contacts are provided by arginine 236 and arginine 292. Phosphothreonine is present on residues threonine 313 and threonine 322. ATP-binding positions include 320 to 325 and aspartate 335; that span reads RGTGGV. Position 372 is a phosphoserine (serine 372).

This sequence belongs to the ATP:guanido phosphotransferase family. In terms of assembly, dimer of identical or non-identical chains, which can be either B (brain type) or M (muscle type). With MM being the major form in skeletal muscle and myocardium, MB existing in myocardium, and BB existing in many tissues, especially brain.

The enzyme catalyses creatine + ATP = N-phosphocreatine + ADP + H(+). Reversibly catalyzes the transfer of phosphate between ATP and various phosphogens (e.g. creatine phosphate). Creatine kinase isoenzymes play a central role in energy transduction in tissues with large, fluctuating energy demands, such as skeletal muscle, heart, brain and spermatozoa. In Sus scrofa (Pig), this protein is Creatine kinase M-type (CKM).